The following is a 120-amino-acid chain: Large ribosomal subunit protein uL24 (120 aa).

A disordered region spans residues 1 to 26 (MVRVISSQPRKQRKARYNAPHHMRGS). Positions 10-24 (RKQRKARYNAPHHMR) are enriched in basic residues.

Belongs to the universal ribosomal protein uL24 family. In terms of assembly, part of the 50S ribosomal subunit.

One of two assembly initiator proteins, it binds directly to the 5'-end of the 23S rRNA, where it nucleates assembly of the 50S subunit. Its function is as follows. Located at the polypeptide exit tunnel on the outside of the subunit. This chain is Large ribosomal subunit protein uL24, found in Methanospirillum hungatei JF-1 (strain ATCC 27890 / DSM 864 / NBRC 100397 / JF-1).